A 247-amino-acid chain; its full sequence is Protein eak-4 (247 aa).

Gly-2 carries the N-myristoyl glycine lipid modification.

Expressed in the 2 embryonic head hypodermal cells XXXL/R.

It is found in the cell membrane. Together with eak-6 and sdf-9, negatively regulates dauer larva formation downstream of the insulin-like receptor daf-2 and in parallel with age-1, pdk-1 and akt-1. This chain is Protein eak-4, found in Caenorhabditis elegans.